Reading from the N-terminus, the 195-residue chain is Large ribosomal subunit protein uL5 (195 aa).

This sequence belongs to the universal ribosomal protein uL5 family. In terms of assembly, part of the 50S ribosomal subunit; part of the 5S rRNA/L5/L18/L25 subcomplex. Contacts the 5S rRNA and the P site tRNA. Forms a bridge to the 30S subunit in the 70S ribosome.

Functionally, this is one of the proteins that bind and probably mediate the attachment of the 5S RNA into the large ribosomal subunit, where it forms part of the central protuberance. In the 70S ribosome it contacts protein S13 of the 30S subunit (bridge B1b), connecting the 2 subunits; this bridge is implicated in subunit movement. Contacts the P site tRNA; the 5S rRNA and some of its associated proteins might help stabilize positioning of ribosome-bound tRNAs. This chain is Large ribosomal subunit protein uL5, found in Chlorobium phaeobacteroides (strain DSM 266 / SMG 266 / 2430).